Consider the following 240-residue polypeptide: Small ribosomal subunit protein uS2 (240 aa).

The protein belongs to the universal ribosomal protein uS2 family.

The sequence is that of Small ribosomal subunit protein uS2 from Wigglesworthia glossinidia brevipalpis.